We begin with the raw amino-acid sequence, 518 residues long: GRIN2-like protein (518 aa).

Disordered stretches follow at residues 1–23 and 467–500; these read MGLE…QSRT and QTEP…FRTM. Residues 476–494 are compositionally biased toward basic and acidic residues; the sequence is KSDEDPLNKEPSSDKMEKK.

As to quaternary structure, may interact with GNAO1.

Functionally, may be involved in neurite outgrowth. The sequence is that of GRIN2-like protein from Gallus gallus (Chicken).